The chain runs to 268 residues: MIETLLEVRNLSKTFRYRTGWFRRQTVEAVKPLSFTLREGQTLAIIGENGSGKSTLAKMLAGMIEPTSGELLIDDHPLHFGDYSFRSQRIRMIFQDPSTSLNPRQRISQILDFPLRLNTDLEPEQRRKQIIETMRMVGLLPDHVSYYPHMLAPGQKQRLGLARALILRPKVIIADEALASLDMSMRSQLINLMLELQEKQGISYIYVTQHIGMMKHISDQVLVMHQGEVVERGSTADVLASPLHELTKRLIAGHFGEALTADAWRKDR.

Residues 6 to 251 (LEVRNLSKTF…PLHELTKRLI (246 aa)) enclose the ABC transporter domain. An ATP-binding site is contributed by 47 to 54 (GENGSGKS).

It belongs to the ABC transporter superfamily.

It is found in the cell inner membrane. Its function is as follows. Involved in a peptide intake transport system that plays a role in the resistance to antimicrobial peptides. This Escherichia coli O6:H1 (strain CFT073 / ATCC 700928 / UPEC) protein is Peptide transport system ATP-binding protein SapF (sapF).